Here is a 257-residue protein sequence, read N- to C-terminus: Phosphonates import ATP-binding protein PhnC (257 aa).

Residues 4–248 enclose the ABC transporter domain; it reads IKFKNVSKVY…VFSKIYGRTI (245 aa). 37–44 lines the ATP pocket; it reads GLSGAGKS.

It belongs to the ABC transporter superfamily. Phosphonates importer (TC 3.A.1.9.1) family. As to quaternary structure, the complex is composed of two ATP-binding proteins (PhnC), two transmembrane proteins (PhnE) and a solute-binding protein (PhnD).

The protein resides in the cell membrane. The catalysed reaction is phosphonate(out) + ATP + H2O = phosphonate(in) + ADP + phosphate + H(+). In terms of biological role, part of the ABC transporter complex PhnCDE involved in phosphonates import. Responsible for energy coupling to the transport system. This Staphylococcus aureus (strain MRSA252) protein is Phosphonates import ATP-binding protein PhnC.